The following is a 309-amino-acid chain: Solute carrier family 25 member 48 (309 aa).

3 Solcar repeats span residues 3–86 (VFQL…TQRL), 99–209 (CSML…FCNW), and 218–305 (PPPC…SLQF). 6 helical membrane-spanning segments follow: residues 9–29 (FLAGWIGGASSVIVGHPLDTV), 61–81 (GLSFPLASITLYNSMVFGFFS), 105–125 (TVASMLTGLVSVGVGAPVDLV), 186–206 (GAMILRDIPGYALYFIPYTLF), 218–238 (PPPCCIWLAGGLAGSISWVTA), and 281–299 (ATVNAIRGFPMCATMFLGY).

It belongs to the mitochondrial carrier (TC 2.A.29) family.

The protein localises to the mitochondrion inner membrane. This chain is Solute carrier family 25 member 48 (slc25a48), found in Danio rerio (Zebrafish).